A 545-amino-acid polypeptide reads, in one-letter code: MATNYIFVTGGVVSSLGKGIAAASLAAILEARGLNVTIMKLDPYINVDPGTMSPIQHGEVFVTVDGAETDLDLGHYERFIRTRMTSSNNFTTGRVYEDIIRRERKGEFLGATIQVIPHITNEIKRRVIEGSKGFDIAIIEIGGTVGDIESQPFLEAIRQLGTEIGRDHTLFMHLTLVPFLGAAGEVKTKPTQHSVKELRSIGIQPDVLVCRSDRSLPATERSKIALFTNVEERAVIGLRDVDSIYKIPSMLKAQSLDDIVTKRFNLDCPEADLHEWEEVLYQESNPNGEVTVGFVGKYVELPDAYKSVNEALAHAGLKNRLTVNIRYIDSQDLETKGTSKLEDVDAILVPGGFGDRGIEGKLIAAKYARENNIPYLGICLGMQVAMIEFARNVAGLTGANSTEFDENCSDPVVGLITEWMDASGQKELRDKHSDLGGTMRLGSQECHLEKGSKALKMYGKETIEERHRHRYEVNNHYIEPLEKAGLKITGYSHDKQLVEILENPKHRWFVAVQFHPEFTSTPRDGHPLFKGFIEAAGEFHKERLG.

Residues 1–266 form an amidoligase domain region; the sequence is MATNYIFVTG…DDIVTKRFNL (266 aa). Ser14 contributes to the CTP binding site. UTP is bound at residue Ser14. Residues 15-20 and Asp72 each bind ATP; that span reads SLGKGI. Mg(2+) contacts are provided by Asp72 and Glu140. Residues 147–149, 187–192, and Lys223 contribute to the CTP site; these read DIE and KTKPTQ. UTP contacts are provided by residues 187 to 192 and Lys223; that span reads KTKPTQ. 239 to 241 contributes to the ATP binding site; the sequence is RDV. In terms of domain architecture, Glutamine amidotransferase type-1 spans 291-542; that stretch reads TVGFVGKYVE…IEAAGEFHKE (252 aa). An L-glutamine-binding site is contributed by Gly352. Cys379 serves as the catalytic Nucleophile; for glutamine hydrolysis. Residues 380 to 383, Glu403, and Arg470 each bind L-glutamine; that span reads LGMQ. Active-site residues include His515 and Glu517.

The protein belongs to the CTP synthase family. In terms of assembly, homotetramer.

The catalysed reaction is UTP + L-glutamine + ATP + H2O = CTP + L-glutamate + ADP + phosphate + 2 H(+). It catalyses the reaction L-glutamine + H2O = L-glutamate + NH4(+). It carries out the reaction UTP + NH4(+) + ATP = CTP + ADP + phosphate + 2 H(+). Its pathway is pyrimidine metabolism; CTP biosynthesis via de novo pathway; CTP from UDP: step 2/2. Allosterically activated by GTP, when glutamine is the substrate; GTP has no effect on the reaction when ammonia is the substrate. The allosteric effector GTP functions by stabilizing the protein conformation that binds the tetrahedral intermediate(s) formed during glutamine hydrolysis. Inhibited by the product CTP, via allosteric rather than competitive inhibition. Its function is as follows. Catalyzes the ATP-dependent amination of UTP to CTP with either L-glutamine or ammonia as the source of nitrogen. Regulates intracellular CTP levels through interactions with the four ribonucleotide triphosphates. This is CTP synthase from Idiomarina loihiensis (strain ATCC BAA-735 / DSM 15497 / L2-TR).